An 867-amino-acid chain; its full sequence is Rifampicin phosphotransferase (867 aa).

An ATP-binding region spans residues 1 to 314 (MKPYVLKFQE…FYIVQSRPIT (314 aa)). Positions 22, 117, 132, 136, 183, 297, 309, and 311 each coordinate ATP. Residues 327-754 (NRVYISVAHQ…TSDGEMINGE (428 aa)) are rifampicin-binding. Positions 336 and 351 each coordinate rifampicin. Residues 767–865 (GLPVSSGTVE…INGTEGYIEI (99 aa)) are swivel phosphohistidine. H825 functions as the Tele-phosphohistidine intermediate in the catalytic mechanism.

The protein belongs to the rifampicin phosphotransferase family.

The catalysed reaction is rifampicin + ATP + H2O = 21-phosphorifampicin + AMP + phosphate + 2 H(+). Functionally, catalyzes the phosphorylation of rifampicin, also known as rifampin (RIF), leading to its inactivation. Confers high level resistance to a variety of clinically used rifamycin antibiotics. Does not show phosphoenolpyruvate (PEP) synthase activity. The protein is Rifampicin phosphotransferase of Listeria monocytogenes serotype 4b (strain F2365).